Consider the following 1105-residue polypeptide: KAT8 regulatory NSL complex subunit 1 (1105 aa).

N6-acetyllysine is present on Lys104. Disordered stretches follow at residues 145 to 211 and 225 to 263; these read GQTA…CTLP and NNSTANKSSVNSMEQPALQGSSRLSPGTDSSSNLGGVKL. A compositionally biased stretch (polar residues) spans 225-258; that stretch reads NNSTANKSSVNSMEQPALQGSSRLSPGTDSSSNL. At Ser249 the chain carries Phosphoserine. Lys262 is covalently cross-linked (Glycyl lysine isopeptide (Lys-Gly) (interchain with G-Cter in SUMO2)). Phosphoserine is present on Ser268. Residues 283 to 314 are a coiled coil; it reads RITALLRRQADIESRARRLQKRLQVVQAKQVE. A Glycyl lysine isopeptide (Lys-Gly) (interchain with G-Cter in SUMO2) cross-link involves residue Lys331. 2 disordered regions span residues 399 to 426 and 733 to 857; these read DSDVTDSSSGGESDIEEEELTRADPEQR and TAKL…RRGE. Basic and acidic residues-rich tracts occupy residues 741–753 and 780–804; these read TRPDRTHRQHLDD and DPNHSKMRLRDHSSERSEVLKHHTD. Residues 827–850 are compositionally biased toward low complexity; the sequence is STSSDSPAPASSSSQVTASTSQQP. The interval 850 to 882 is required for activation of KAT8 histone acetyltransferase activity; that stretch reads PVRRRRGESSFDINNIVIPMSVAATTRVEKLQY. In terms of domain architecture, PEHE spans 884–1035; the sequence is EILTPSWREV…GLDEQSVQPW (152 aa). Positions 910 to 928 are interaction with KAT8 HAT domain; that stretch reads EDLSDAAFAALHAKCEEME. The disordered stretch occupies residues 938 to 1034; that stretch reads VPPQRRGSRS…LGLDEQSVQP (97 aa). Residues 955–965 show a composition bias toward polar residues; sequence TTPQLGSANPS. Residues 975-988 show a composition bias toward low complexity; that stretch reads SSSHSLSEYSHGQS. Phosphoserine is present on residues Ser991 and Ser994. Phosphothreonine is present on Thr1003. Positions 1008–1019 are enriched in basic and acidic residues; it reads DTPRHLASEDTR. Phosphoserine is present on Ser1045. The disordered stretch occupies residues 1058–1105; it reads ERAARCTRRTSGSKTGRETEAAPTSPPIVPLKSRHLVAAATAQRPTHR.

As to quaternary structure, component of the NSL complex at least composed of MOF/KAT8, KANSL1, KANSL2, KANSL3, MCRS1, PHF20, OGT1/OGT, WDR5 and HCFC1. Interacts (via PEHE domain) with KAT8 (via HAT domain); the interaction is direct. Component of some MLL1/MLL complex, at least composed of the core components KMT2A/MLL1, ASH2L, HCFC1, WDR5 and RBBP5, as well as the facultative components BACC1, CHD8, E2F6, HSP70, INO80C, KANSL1, LAS1L, MAX, MCRS1, MGA, KAT8/MOF, PELP1, PHF20, PRP31, RING2, RUVB1/TIP49A, RUVB2/TIP49B, SENP3, TAF1, TAF4, TAF6, TAF7, TAF9 and TEX10. Expressed in the brain.

It is found in the nucleus. The protein localises to the chromosome. It localises to the centromere. Its subcellular location is the kinetochore. The protein resides in the mitochondrion. It is found in the cytoplasm. The protein localises to the cytoskeleton. It localises to the spindle pole. Functionally, non-catalytic component of the NSL histone acetyltransferase complex, a multiprotein complex that mediates histone H4 acetylation at 'Lys-5'- and 'Lys-8' (H4K5ac and H4K8ac) at transcription start sites and promotes transcription initiation. The NSL complex also acts as a regulator of gene expression in mitochondria. In addition to its role in transcription, KANSL1 also plays an essential role in spindle assembly during mitosis. Associates with microtubule ends and contributes to microtubule stability. This Homo sapiens (Human) protein is KAT8 regulatory NSL complex subunit 1 (KANSL1).